Consider the following 271-residue polypeptide: Phycocyanobilin lyase subunit alpha (271 aa).

Belongs to the CpcE/RpcE/PecE family. In terms of assembly, cpcE and CpcF associate to form a lyase.

Required for the chromophorylation of the cpcA1 gene product. The chain is Phycocyanobilin lyase subunit alpha (cpcE1) from Pseudanabaena tenuis (strain PCC 7409).